The sequence spans 94 residues: Co-chaperonin GroES (94 aa).

The protein belongs to the GroES chaperonin family. Heptamer of 7 subunits arranged in a ring. Interacts with the chaperonin GroEL.

It is found in the cytoplasm. Functionally, together with the chaperonin GroEL, plays an essential role in assisting protein folding. The GroEL-GroES system forms a nano-cage that allows encapsulation of the non-native substrate proteins and provides a physical environment optimized to promote and accelerate protein folding. GroES binds to the apical surface of the GroEL ring, thereby capping the opening of the GroEL channel. This chain is Co-chaperonin GroES, found in Caldanaerobacter subterraneus subsp. tengcongensis (strain DSM 15242 / JCM 11007 / NBRC 100824 / MB4) (Thermoanaerobacter tengcongensis).